The sequence spans 220 residues: Ribosomal RNA small subunit methyltransferase Nep1 (220 aa).

Residues Gly178, Gly183, and Leu196 to Leu201 each bind S-adenosyl-L-methionine.

This sequence belongs to the class IV-like SAM-binding methyltransferase superfamily. RNA methyltransferase NEP1 family. In terms of assembly, homodimer.

It catalyses the reaction a pseudouridine in rRNA + S-adenosyl-L-methionine = an N(1)-methylpseudouridine in rRNA + S-adenosyl-L-homocysteine + H(+). Methyltransferase involved in ribosomal biogenesis. Specifically catalyzes the N1-methylation of the pseudouridine corresponding to position 914 in M.jannaschii 16S rRNA. In Thermococcus kodakarensis (strain ATCC BAA-918 / JCM 12380 / KOD1) (Pyrococcus kodakaraensis (strain KOD1)), this protein is Ribosomal RNA small subunit methyltransferase Nep1.